We begin with the raw amino-acid sequence, 223 residues long: UPF0758 protein FMG_0357 (223 aa).

Residues 101-223 (SLNDPDSVAE…SLSMRKGMYF (123 aa)) enclose the MPN domain. Zn(2+) is bound by residues His172, His174, and Asp185. A JAMM motif motif is present at residues 172–185 (HNHPSGSLIPSNAD).

It belongs to the UPF0758 family.

The protein is UPF0758 protein FMG_0357 of Finegoldia magna (strain ATCC 29328 / DSM 20472 / WAL 2508) (Peptostreptococcus magnus).